Consider the following 228-residue polypeptide: Small ribosomal subunit protein uS7m (228 aa).

The transit peptide at 1 to 33 directs the protein to the mitochondrion; sequence MAASVRHLLKPWTPSLCLMRWSRYNPYYLDPEP.

This sequence belongs to the universal ribosomal protein uS7 family. Component of the mitochondrial ribosome small subunit (28S) which comprises a 12S rRNA and about 30 distinct proteins.

It is found in the mitochondrion. This chain is Small ribosomal subunit protein uS7m (mrps7), found in Danio rerio (Zebrafish).